Reading from the N-terminus, the 338-residue chain is 1-aminocyclopropane-1-carboxylate deaminase (338 aa).

An N6-(pyridoxal phosphate)lysine modification is found at lysine 51. Serine 78 serves as the catalytic Nucleophile.

This sequence belongs to the ACC deaminase/D-cysteine desulfhydrase family. Homotrimer. It depends on pyridoxal 5'-phosphate as a cofactor.

The enzyme catalyses 1-aminocyclopropane-1-carboxylate + H2O = 2-oxobutanoate + NH4(+). In terms of biological role, catalyzes a cyclopropane ring-opening reaction, the irreversible conversion of 1-aminocyclopropane-1-carboxylate (ACC) to ammonia and alpha-ketobutyrate. Allows growth on ACC as a nitrogen source. In Ralstonia pickettii (strain 12J), this protein is 1-aminocyclopropane-1-carboxylate deaminase.